The chain runs to 296 residues: Probable deoxyuridine 5'-triphosphate nucleotidohydrolase (296 aa).

Residues 66–102 (EIDKNIVKNLEDKVNCLEQDVQYLKNELKKKDADWQQ) adopt a coiled-coil conformation.

It belongs to the dUTPase family.

The catalysed reaction is dUTP + H2O = dUMP + diphosphate + H(+). It participates in pyrimidine metabolism; dUMP biosynthesis; dUMP from dCTP (dUTP route): step 2/2. In terms of biological role, this enzyme is involved in nucleotide metabolism: it produces dUMP, the immediate precursor of thymidine nucleotides and it decreases the intracellular concentration of dUTP so that uracil cannot be incorporated into DNA. The polypeptide is Probable deoxyuridine 5'-triphosphate nucleotidohydrolase (Acheta domesticus (House cricket)).